Consider the following 214-residue polypeptide: Phosphoenolpyruvate guanylyltransferase (214 aa).

Phosphoenolpyruvate is bound by residues T148, G163, and S166.

This sequence belongs to the CofC family.

It carries out the reaction phosphoenolpyruvate + GTP + H(+) = enolpyruvoyl-2-diphospho-5'-guanosine + diphosphate. It functions in the pathway cofactor biosynthesis; coenzyme F420 biosynthesis. Its function is as follows. Guanylyltransferase that catalyzes the activation of phosphoenolpyruvate (PEP) as enolpyruvoyl-2-diphospho-5'-guanosine, via the condensation of PEP with GTP. It is involved in the biosynthesis of coenzyme F420, a hydride carrier cofactor. This chain is Phosphoenolpyruvate guanylyltransferase, found in Mycolicibacterium gilvum (strain PYR-GCK) (Mycobacterium gilvum (strain PYR-GCK)).